The following is a 372-amino-acid chain: Glutamate 5-kinase (372 aa).

Residue Lys14 coordinates ATP. 3 residues coordinate substrate: Ser54, Asp141, and Asn153. 173–174 provides a ligand contact to ATP; sequence TD. Residues 280-358 enclose the PUA domain; that stretch reads RGHVVIDDGA…GEIESVLGYM (79 aa).

The protein belongs to the glutamate 5-kinase family.

Its subcellular location is the cytoplasm. It catalyses the reaction L-glutamate + ATP = L-glutamyl 5-phosphate + ADP. Its pathway is amino-acid biosynthesis; L-proline biosynthesis; L-glutamate 5-semialdehyde from L-glutamate: step 1/2. Its function is as follows. Catalyzes the transfer of a phosphate group to glutamate to form L-glutamate 5-phosphate. In Paraburkholderia xenovorans (strain LB400), this protein is Glutamate 5-kinase.